The primary structure comprises 229 residues: PKHD-type hydroxylase RPA3479 (229 aa).

The Fe2OG dioxygenase domain occupies 78–180; sequence QIFPPLFNRY…RVASFFWLQS (103 aa). Residues His98, Asp100, and His161 each coordinate Fe cation. Residue Arg171 coordinates 2-oxoglutarate.

Requires Fe(2+) as cofactor. It depends on L-ascorbate as a cofactor.

In Rhodopseudomonas palustris (strain ATCC BAA-98 / CGA009), this protein is PKHD-type hydroxylase RPA3479.